A 179-amino-acid polypeptide reads, in one-letter code: Translationally-controlled tumor protein homolog (179 aa).

Residues 1–179 (MIIYKDIISG…WKHGLEEMKV (179 aa)) form the TCTP domain.

It belongs to the TCTP family.

Its subcellular location is the cytoplasm. It localises to the cytoskeleton. Functionally, involved in protein synthesis. Involved in microtubule stabilization. Involved in osmoadaptation. This is Translationally-controlled tumor protein homolog from Emericella nidulans (strain FGSC A4 / ATCC 38163 / CBS 112.46 / NRRL 194 / M139) (Aspergillus nidulans).